Reading from the N-terminus, the 343-residue chain is Putative trace amine-associated receptor 3 (343 aa).

At 1–35 the chain is on the extracellular side; that stretch reads MDLTYIPEDLSSCPKFVNKILSSHQPLFSCPGDNV. The helical transmembrane segment at 36–56 threads the bilayer; sequence FGYDWSHDYPLFGNLVIMVSI. Residues 57 to 68 lie on the Cytoplasmic side of the membrane; the sequence is SHFKQLHSPTNF. A helical transmembrane segment spans residues 69–89; sequence LILSMATTDFLLGFVIMPYSI. Topologically, residues 90 to 150 are extracellular; the sequence is MRSVESCWYF…TKMTNSTIKQ (61 aa). Residues cysteine 104 and cysteine 189 are joined by a disulfide bond. The N-linked (GlcNAc...) asparagine glycan is linked to asparagine 145. The chain crosses the membrane as a helical span at residues 151–168; it reads LLAFCWSVPALFSFGLVL. Over 169-172 the chain is Cytoplasmic; that stretch reads SEAD. The extracellular Loop 2 (ECL2) stretch occupies residues 173–186; it reads VSGMQSYKILVACF. The chain crosses the membrane as a helical span at residues 173 to 193; that stretch reads VSGMQSYKILVACFNFCALTF. The Extracellular portion of the chain corresponds to 194-198; the sequence is NKFWG. A helical membrane pass occupies residues 199–223; that stretch reads TILFTTCFFTPGSIMVGIYGKIFIV. The Cytoplasmic portion of the chain corresponds to 224–257; sequence SKQHARVISHVPENTKGAVKKHLSKKKDRKAAKT. Residues 258 to 278 form a helical membrane-spanning segment; that stretch reads LGIVMGVFLACWLPCFLAVLI. Topologically, residues 279–287 are extracellular; sequence DPYLDYSTP. A helical transmembrane segment spans residues 288–308; it reads ILILDLLVWLRYFNSTCNPLI. The Cytoplasmic segment spans residues 309–343; the sequence is HGFFNPWFQKAFKYIVSGKIFSSHSETANLFPEAH.

The protein belongs to the G-protein coupled receptor 1 family. In terms of tissue distribution, not expressed in the pons, thalamus, globus pallidus, caudate, putamen or cerebellum.

The protein localises to the cell membrane. In terms of biological role, putative olfactory receptor activated by several primary trace amines. This is Putative trace amine-associated receptor 3 from Homo sapiens (Human).